The sequence spans 148 residues: Large ribosomal subunit protein uL15 (148 aa).

The disordered stretch occupies residues 1-47 (MTKLEDLRPTPGSVKPRKRVGRGIGSGHGKTSGRGHKGQKSRGSGKV). A compositionally biased stretch (basic residues) spans 31 to 45 (TSGRGHKGQKSRGSG).

The protein belongs to the universal ribosomal protein uL15 family. As to quaternary structure, part of the 50S ribosomal subunit.

In terms of biological role, binds to the 23S rRNA. The sequence is that of Large ribosomal subunit protein uL15 from Pseudothermotoga lettingae (strain ATCC BAA-301 / DSM 14385 / NBRC 107922 / TMO) (Thermotoga lettingae).